A 452-amino-acid chain; its full sequence is Nebulette (452 aa).

Positions 1–26 (MKVPVSGDVKEETEEENVEQEENQEA) are disordered. The span at 11–23 (EETEEENVEQEEN) shows a compositional bias: acidic residues. Nebulin repeat units follow at residues 29 to 63 (SLKP…KSKD), 64 to 98 (KCTF…ADLS), 101 to 135 (LYKD…AEKG), 138 to 172 (DYTH…GTHT), 173 to 199 (YTAE…EYKK), 206 to 240 (KEPS…NEMK), 263 to 278 (LASD…ENKG), 279 to 313 (LYHF…KNKG), 315 to 349 (SMLE…KEIK), 352 to 386 (SSLD…NEIK), 389 to 423 (GMEL…TEIK), and 426 to 452 (GMQV…VRMV).

In terms of assembly, interacts (via nebulin repeats 1-5) with DESM (via rod region). Interacts (via SH3 domain) with XIRP2.

It is found in the cytoplasm. Functionally, binds to actin and plays an important role in the assembly of the Z-disk. May functionally link sarcomeric actin to the desmin intermediate filaments in the heart muscle sarcomeres. Isoform 2 might play a role in the assembly of focal adhesion. The chain is Nebulette (Nebl) from Mus musculus (Mouse).